The following is a 301-amino-acid chain: tRNA dimethylallyltransferase (301 aa).

5 to 12 (GPTASGKS) provides a ligand contact to ATP. Residue 7–12 (TASGKS) participates in substrate binding. Residues 30–33 (DSMQ) are interaction with substrate tRNA.

Belongs to the IPP transferase family. As to quaternary structure, monomer. Requires Mg(2+) as cofactor.

It catalyses the reaction adenosine(37) in tRNA + dimethylallyl diphosphate = N(6)-dimethylallyladenosine(37) in tRNA + diphosphate. Functionally, catalyzes the transfer of a dimethylallyl group onto the adenine at position 37 in tRNAs that read codons beginning with uridine, leading to the formation of N6-(dimethylallyl)adenosine (i(6)A). The sequence is that of tRNA dimethylallyltransferase from Rhodopseudomonas palustris (strain TIE-1).